The following is a 224-amino-acid chain: MENRDIARLIDHTLLRPDATQEDIEKLCAEAVEYGFASVCTATCWTSFVREYLDAHNSPVKVCSVVGFPFGSALTDAKREETWDAVEYGADEIDMVINVGYLRSGMLDLFEKDIRTVVKVSGSAAVKVIIETCYLTDEQKVLAARTAKKCGAAFVKTSTGYGPSGARLEDVRLIREAVPDILIKASGGIRTYEQAKAFTEAGASRIGTSSGIAIVTGARGESSY.

Asp-94 (proton donor/acceptor) is an active-site residue. The active-site Schiff-base intermediate with acetaldehyde is the Lys-156. The Proton donor/acceptor role is filled by Lys-184.

The protein belongs to the DeoC/FbaB aldolase family. DeoC type 1 subfamily.

It is found in the cytoplasm. It carries out the reaction 2-deoxy-D-ribose 5-phosphate = D-glyceraldehyde 3-phosphate + acetaldehyde. Its pathway is carbohydrate degradation; 2-deoxy-D-ribose 1-phosphate degradation; D-glyceraldehyde 3-phosphate and acetaldehyde from 2-deoxy-alpha-D-ribose 1-phosphate: step 2/2. Functionally, catalyzes a reversible aldol reaction between acetaldehyde and D-glyceraldehyde 3-phosphate to generate 2-deoxy-D-ribose 5-phosphate. The protein is Deoxyribose-phosphate aldolase of Methanocella arvoryzae (strain DSM 22066 / NBRC 105507 / MRE50).